Consider the following 41-residue polypeptide: Large ribosomal subunit protein bL36B (41 aa).

It belongs to the bacterial ribosomal protein bL36 family.

This chain is Large ribosomal subunit protein bL36B, found in Actinobacillus pleuropneumoniae serotype 5b (strain L20).